A 289-amino-acid chain; its full sequence is Putative 2-aminoethylphosphonate transport system permease protein PhnU (289 aa).

Helical transmembrane passes span 19-39, 76-96, 111-131, 150-170, 202-222, and 254-274; these read WLLLPLLVLATLFFWPLSLIV, FFATAGCLLLGSVMSLILVFI, FIALPTFLITLAFTFIYGSAG, FLYSMQGVILAEITVFTPLVM, VIFPAALPALMAGGSLCLLLT, and YTVACMIALINIVLSLGLFSL. In terms of domain architecture, ABC transmembrane type-1 spans 68–275; that stretch reads LLNTLQIAFF…VLSLGLFSLY (208 aa).

This sequence belongs to the binding-protein-dependent transport system permease family.

It is found in the cell inner membrane. Functionally, probably part of the PhnSTUV complex (TC 3.A.1.11.5) involved in 2-aminoethylphosphonate import. Probably responsible for the translocation of the substrate across the membrane. The chain is Putative 2-aminoethylphosphonate transport system permease protein PhnU (phnU) from Salmonella paratyphi A (strain ATCC 9150 / SARB42).